The chain runs to 379 residues: Cyclic di-GMP phosphodiesterase PdeB (379 aa).

In terms of domain architecture, HD-GYP spans 114-310 (FYKKQKKIFI…PLDFIVELND (197 aa)).

It depends on Mn(2+) as a cofactor.

The catalysed reaction is 3',3'-c-di-GMP + 2 H2O = 2 GMP + 2 H(+). In terms of biological role, phosphodiesterase (PDE) that catalyzes the hydrolysis of cyclic diguanylate (c-di-GMP) to GMP. This is Cyclic di-GMP phosphodiesterase PdeB from Borreliella burgdorferi (strain ATCC 35210 / DSM 4680 / CIP 102532 / B31) (Borrelia burgdorferi).